Reading from the N-terminus, the 280-residue chain is Borealin (280 aa).

Positions 140 to 153 are enriched in basic residues; it reads KVAAKKPSTARRTR. The tract at residues 140 to 187 is disordered; the sequence is KVAAKKPSTARRTRASVGNVANTSKRTSKRGRATPSASKQAETSLLGY.

The protein belongs to the borealin family. In terms of assembly, component of the CPC at least composed of survivin/birc5, incenp, cdca8/borealin and/or cdca9/dasra-A, and aurkb/aurora-B. Interacts with incenp (via N-terminus).

The protein localises to the nucleus. The protein resides in the chromosome. Its subcellular location is the centromere. It is found in the cytoplasm. It localises to the cytoskeleton. The protein localises to the spindle. In terms of biological role, component of the chromosomal passenger complex (CPC), a complex that acts as a key regulator of mitosis. The CPC complex has essential functions at the centromere in ensuring correct chromosome alignment and segregation and is required for chromatin-induced microtubule stabilization and spindle assembly. Contributes to CPC function by facilitating loading of the CPC onto chromosomes. The polypeptide is Borealin (cdca8) (Xenopus laevis (African clawed frog)).